We begin with the raw amino-acid sequence, 364 residues long: Alanine racemase (364 aa).

K34 acts as the Proton acceptor; specific for D-alanine in catalysis. N6-(pyridoxal phosphate)lysine is present on K34. Substrate is bound at residue R129. Y259 functions as the Proton acceptor; specific for L-alanine in the catalytic mechanism. M307 is a binding site for substrate.

It belongs to the alanine racemase family. Requires pyridoxal 5'-phosphate as cofactor.

It catalyses the reaction L-alanine = D-alanine. Its pathway is amino-acid biosynthesis; D-alanine biosynthesis; D-alanine from L-alanine: step 1/1. Functionally, catalyzes the interconversion of L-alanine and D-alanine. May also act on other amino acids. This Coxiella burnetii (strain RSA 331 / Henzerling II) protein is Alanine racemase (alr).